We begin with the raw amino-acid sequence, 118 residues long: Ribonuclease P protein component 2 (118 aa).

Belongs to the eukaryotic/archaeal RNase P protein component 2 family. In terms of assembly, consists of a catalytic RNA component and at least 4-5 protein subunits.

It is found in the cytoplasm. It carries out the reaction Endonucleolytic cleavage of RNA, removing 5'-extranucleotides from tRNA precursor.. Functionally, part of ribonuclease P, a protein complex that generates mature tRNA molecules by cleaving their 5'-ends. This Pyrococcus abyssi (strain GE5 / Orsay) protein is Ribonuclease P protein component 2.